The primary structure comprises 435 residues: ATP-dependent protease ATPase subunit HslU (435 aa).

ATP-binding positions include Ile-18, 60-65 (GVGKTE), Asp-248, Glu-313, and Arg-385.

It belongs to the ClpX chaperone family. HslU subfamily. A double ring-shaped homohexamer of HslV is capped on each side by a ring-shaped HslU homohexamer. The assembly of the HslU/HslV complex is dependent on binding of ATP.

It is found in the cytoplasm. ATPase subunit of a proteasome-like degradation complex; this subunit has chaperone activity. The binding of ATP and its subsequent hydrolysis by HslU are essential for unfolding of protein substrates subsequently hydrolyzed by HslV. HslU recognizes the N-terminal part of its protein substrates and unfolds these before they are guided to HslV for hydrolysis. The protein is ATP-dependent protease ATPase subunit HslU of Roseobacter denitrificans (strain ATCC 33942 / OCh 114) (Erythrobacter sp. (strain OCh 114)).